The chain runs to 199 residues: Probable GTP-binding protein EngB (199 aa).

In terms of domain architecture, EngB-type G spans 22–196 (NWPEFAFSGR…GKFILDLVDS (175 aa)). Residues 30 to 37 (GRSNVGKS), 57 to 61 (GRTQS), 75 to 78 (DLPG), 142 to 145 (TKVD), and 175 to 177 (FSA) each bind GTP. Positions 37 and 59 each coordinate Mg(2+).

Belongs to the TRAFAC class TrmE-Era-EngA-EngB-Septin-like GTPase superfamily. EngB GTPase family. Requires Mg(2+) as cofactor.

Necessary for normal cell division and for the maintenance of normal septation. The chain is Probable GTP-binding protein EngB from Halothermothrix orenii (strain H 168 / OCM 544 / DSM 9562).